Consider the following 136-residue polypeptide: ATP synthase epsilon chain (136 aa).

The protein belongs to the ATPase epsilon chain family. F-type ATPases have 2 components, CF(1) - the catalytic core - and CF(0) - the membrane proton channel. CF(1) has five subunits: alpha(3), beta(3), gamma(1), delta(1), epsilon(1). CF(0) has three main subunits: a, b and c.

It localises to the cell membrane. Produces ATP from ADP in the presence of a proton gradient across the membrane. The sequence is that of ATP synthase epsilon chain from Ureaplasma urealyticum serovar 10 (strain ATCC 33699 / Western).